The primary structure comprises 209 residues: A-type ATP synthase subunit D (209 aa).

This sequence belongs to the V-ATPase D subunit family. Has multiple subunits with at least A(3), B(3), C, D, E, F, H, I and proteolipid K(x).

The protein localises to the cell membrane. Its function is as follows. Component of the A-type ATP synthase that produces ATP from ADP in the presence of a proton gradient across the membrane. The polypeptide is A-type ATP synthase subunit D (Thermoplasma volcanium (strain ATCC 51530 / DSM 4299 / JCM 9571 / NBRC 15438 / GSS1)).